The primary structure comprises 428 residues: Adenylosuccinate synthetase (428 aa).

Residues 12 to 18 (GDEGKGK) and 40 to 42 (GHT) each bind GTP. Residue Asp-13 is the Proton acceptor of the active site. Asp-13 and Gly-40 together coordinate Mg(2+). Residues 13-16 (DEGK), 38-41 (NAGH), Thr-131, Arg-145, Gln-226, Thr-241, and Arg-305 each bind IMP. His-41 functions as the Proton donor in the catalytic mechanism. 301–307 (ATTGRKR) serves as a coordination point for substrate. Residues Arg-307, 333–335 (KLD), and 415–417 (SVG) contribute to the GTP site.

This sequence belongs to the adenylosuccinate synthetase family. As to quaternary structure, homodimer. Requires Mg(2+) as cofactor.

The protein resides in the cytoplasm. It carries out the reaction IMP + L-aspartate + GTP = N(6)-(1,2-dicarboxyethyl)-AMP + GDP + phosphate + 2 H(+). It functions in the pathway purine metabolism; AMP biosynthesis via de novo pathway; AMP from IMP: step 1/2. Functionally, plays an important role in the de novo pathway of purine nucleotide biosynthesis. Catalyzes the first committed step in the biosynthesis of AMP from IMP. The sequence is that of Adenylosuccinate synthetase from Nitratidesulfovibrio vulgaris (strain DSM 19637 / Miyazaki F) (Desulfovibrio vulgaris).